The sequence spans 486 residues: Cysteine--tRNA ligase (486 aa).

Residue cysteine 27 participates in Zn(2+) binding. Residues 29 to 39 (PTTYNFIHLGN) carry the 'HIGH' region motif. Residues cysteine 207, histidine 232, and glutamate 236 each contribute to the Zn(2+) site. Positions 264–268 (KMSKS) match the 'KMSKS' region motif. Residue lysine 267 participates in ATP binding.

The protein belongs to the class-I aminoacyl-tRNA synthetase family. Monomer. Zn(2+) is required as a cofactor.

It is found in the cytoplasm. It carries out the reaction tRNA(Cys) + L-cysteine + ATP = L-cysteinyl-tRNA(Cys) + AMP + diphosphate. This is Cysteine--tRNA ligase from Desulforamulus reducens (strain ATCC BAA-1160 / DSM 100696 / MI-1) (Desulfotomaculum reducens).